The sequence spans 360 residues: Peptide chain release factor 1 (360 aa).

Glutamine 237 carries the N5-methylglutamine modification.

This sequence belongs to the prokaryotic/mitochondrial release factor family. Post-translationally, methylated by PrmC. Methylation increases the termination efficiency of RF1.

The protein resides in the cytoplasm. Functionally, peptide chain release factor 1 directs the termination of translation in response to the peptide chain termination codons UAG and UAA. The polypeptide is Peptide chain release factor 1 (Pseudomonas savastanoi pv. phaseolicola (strain 1448A / Race 6) (Pseudomonas syringae pv. phaseolicola (strain 1448A / Race 6))).